We begin with the raw amino-acid sequence, 138 residues long: Large ribosomal subunit protein uL14 (138 aa).

Belongs to the universal ribosomal protein uL14 family. As to quaternary structure, part of the 50S ribosomal subunit. Forms a cluster with proteins L3 and L24e, part of which may contact the 16S rRNA in 2 intersubunit bridges.

Functionally, binds to 23S rRNA. Forms part of two intersubunit bridges in the 70S ribosome. The sequence is that of Large ribosomal subunit protein uL14 from Hyperthermus butylicus (strain DSM 5456 / JCM 9403 / PLM1-5).